Here is a 189-residue protein sequence, read N- to C-terminus: Ribonuclease M5 (189 aa).

In terms of domain architecture, Toprim spans 8 to 91; sequence KEIIVVEGKD…AFLPKEEALA (84 aa). The Mg(2+) site is built by Glu14, Asp60, and Asp62.

Belongs to the ribonuclease M5 family. It depends on Mg(2+) as a cofactor.

It localises to the cytoplasm. The enzyme catalyses Endonucleolytic cleavage of RNA, removing 21 and 42 nucleotides, respectively, from the 5'- and 3'-termini of a 5S-rRNA precursor.. Required for correct processing of both the 5' and 3' ends of 5S rRNA precursor. Cleaves both sides of a double-stranded region yielding mature 5S rRNA in one step. The chain is Ribonuclease M5 from Bacillus cereus (strain ATCC 14579 / DSM 31 / CCUG 7414 / JCM 2152 / NBRC 15305 / NCIMB 9373 / NCTC 2599 / NRRL B-3711).